The chain runs to 869 residues: NACHT, LRR and PYD domains-containing protein 6 (869 aa).

The Pyrin domain maps to 37–128 (KLRDAPLDGR…REHVLRQHAK (92 aa)). Residues 194–511 (LTVVLQGPAG…EFLAALSYLL (318 aa)) form the NACHT domain. An ATP-binding site is contributed by 200 to 207 (GPAGIGKT). The interval 350–354 (KDKKK) is disordered. The stretch at 460-485 (EEDLEKLKLRGSQVQTIFLNKKEIPG) is one LRR 1 repeat. Residues 577 to 608 (VQGQSHPKGPPVGAKKTAELEDIEDAEEEEEE) are disordered. Residues 596–608 (LEDIEDAEEEEEE) show a composition bias toward acidic residues. 2 LRR repeats span residues 635 to 658 (LSSLPEIVLERVRLTRMDLEVLNY) and 837 to 860 (TLSLTSVELSENSLRDLQAVKTSK).

The protein belongs to the NLRP family. Homomultimer; forms the NLRP6 inflammasome polymeric complex, a filament composed of homopolymers in response to pathogens and other damage-associated signals. The core of NLRP6 inflammasomes consists of a signal sensor component (NLRP6), an adapter (PYCARD/ASC), which recruits effector pro-inflammatory caspases (CASP1 and CASP4). Interacts (via pyrin domain) with PYCARD/ASC (via pyrin domain); interaction takes place following NLRP6 activation and formation of liquid-liquid phase separation (LLPS), initiating nucleation which greatly enhances further addition of soluble PYCARD/ASC molecules to the speck in a prion-like polymerization process. Clustered PYCARD/ASC nucleates the formation of CASP1 (or possibly CASP4) filaments through the interaction of their respective CARD domains, acting as a platform for CASP1 polymerization. CASP1 filament formation increases local enzyme concentration, resulting in trans-autocleavage and activation. Active CASP1 then processes IL1B and IL18 precursors, leading to the release of mature cytokines in the extracellular milieu and inflammatory response. Interacts with DHX15. Polyubiquitinated with 'Lys-63'-linked chains, promoting the interaction with PYCARD/ASC and formation of the NLRP6 inflammasome. Deubiquitination by CYLD decreases the interaction with PYCARD/ASC. Highly expressed in the gastrointestinal tract, predominantly in colonic myofibroblasts and in colonic epithelial and endothelial cells. Within the intestinal mucosa, highly expressed by goblet cells. Also expressed in hepatocytes and in immune cells, including CD4(+) and CD8(+) T-cells, dendritic cells, mastocytes and peritoneal macrophages, as well as in lung, kidney, bladder and gonads.

Its subcellular location is the cytoplasm. It is found in the inflammasome. It localises to the cell membrane. The protein resides in the nucleus membrane. Acts as the sensor component of the NLRP6 inflammasome, which mediates inflammasome activation in response to various pathogen-associated signals, leading to maturation and secretion of IL1B and IL18. Inflammasomes are supramolecular complexes that assemble in the cytosol in response to pathogens and other damage-associated signals and play critical roles in innate immunity and inflammation. Acts as a recognition receptor (PRR): recognizes and binds specific pathogens and other damage-associated signals, such as lipoteichoic acid (LTA), a cell-wall component of Gram-positive bacteria, or double stranded RNA (dsRNA). May also recognize and bind lipopolysaccharide (LPS), a major component of the outer membrane of Gram-negative bacteria; however, LPS is probably not a major activator of the NLRP6 inflammasome. Following LTA- or dsRNA-binding, NLRP6 undergoes liquid-liquid phase separation (LLPS), enhancing multivalent interactions, an essential step for the formation of the NLRP6 inflammasome polymeric complex. The NLRP6 inflammasome acts by promoting recruitment of effector pro-inflammatory caspases (CASP1 and/or CASP4) that catalyze maturation and secretion of IL1B and IL18 in the extracellular milieu. The NLRP6 inflammasome plays a central role in the maintenance of epithelial integrity and host defense against microbial infections in the intestine. Required to restrict infection against Gram-positive bacteria by recognizing lipoteichoic acid (LTA), leading to recruitment of CASP4 and CASP1, and subsequent maturation and secretion of IL1B and IL18. Involved in intestinal antiviral innate immunity together with DHX15: recognizes and binds viral dsRNA to restrict infection by enteric viruses through the interferon pathway and GSDMD-dependent release of IL18. Required to prevent infection by the apicomplexan parasite C.tyzzeri in enterocytes by promoting GSDMD-dependent release of IL18. The NLRP6 inflammasome may also regulate the gut microbiota composition by acting as a sensor of microbiota-associated metabolites to form a PYCARD/ASC-dependent inflammasome for downstream IL18 release and secretion of antimicrobial peptides. Its role in the regulation of the gut microbiota composition is however subject to discussion. Essential for gut mucosal self-renewal and proliferation. Regulate mucus secretion in an inflammasome- and autophagy-dependent manner to prevent invasion by enteric bacteria. During systemic bacterial infections, the NLRP6 inflammasome negatively regulates neutrophil recruitment and neutrophil extracellular traps (NETs) formation. May promote peripheral nerve recovery following injury via an inflammasome-independent mechanism. The protein is NACHT, LRR and PYD domains-containing protein 6 of Mus musculus (Mouse).